Consider the following 615-residue polypeptide: DNA mismatch repair protein MutL (615 aa).

Positions 362–397 (HFAEPAVREPVAPRYSPAPASGGRPAASWPNAQPGY) are disordered. The span at 378–391 (PAPASGGRPAASWP) shows a compositional bias: low complexity.

The protein belongs to the DNA mismatch repair MutL/HexB family.

In terms of biological role, this protein is involved in the repair of mismatches in DNA. It is required for dam-dependent methyl-directed DNA mismatch repair. May act as a 'molecular matchmaker', a protein that promotes the formation of a stable complex between two or more DNA-binding proteins in an ATP-dependent manner without itself being part of a final effector complex. The protein is DNA mismatch repair protein MutL of Escherichia fergusonii (strain ATCC 35469 / DSM 13698 / CCUG 18766 / IAM 14443 / JCM 21226 / LMG 7866 / NBRC 102419 / NCTC 12128 / CDC 0568-73).